The sequence spans 887 residues: Bifunctional uridylyltransferase/uridylyl-removing enzyme (887 aa).

The tract at residues 1–337 (MINTSPLLNY…RLPNYERKIE (337 aa)) is uridylyltransferase. The interval 339–699 (VNDHFKIVDN…AHRKAAQDAV (361 aa)) is uridylyl-removing. Residues 457–579 (VDAHTLLLLR…LGDMEHLDYL (123 aa)) enclose the HD domain. ACT domains are found at residues 700–782 (QIFI…LMQR) and 809–887 (MVEI…ICQH).

Belongs to the GlnD family. Mg(2+) is required as a cofactor.

It catalyses the reaction [protein-PII]-L-tyrosine + UTP = [protein-PII]-uridylyl-L-tyrosine + diphosphate. The catalysed reaction is [protein-PII]-uridylyl-L-tyrosine + H2O = [protein-PII]-L-tyrosine + UMP + H(+). Uridylyltransferase (UTase) activity is inhibited by glutamine, while glutamine activates uridylyl-removing (UR) activity. Modifies, by uridylylation and deuridylylation, the PII regulatory proteins (GlnB and homologs), in response to the nitrogen status of the cell that GlnD senses through the glutamine level. Under low glutamine levels, catalyzes the conversion of the PII proteins and UTP to PII-UMP and PPi, while under higher glutamine levels, GlnD hydrolyzes PII-UMP to PII and UMP (deuridylylation). Thus, controls uridylylation state and activity of the PII proteins, and plays an important role in the regulation of nitrogen assimilation and metabolism. This Acinetobacter baumannii (strain AB307-0294) protein is Bifunctional uridylyltransferase/uridylyl-removing enzyme.